Reading from the N-terminus, the 307-residue chain is Dihydroorotate dehydrogenase A (fumarate) (307 aa).

FMN-binding positions include S21 and K46–T47. Residues K46, N70–L74, and N130 each bind substrate. Position 130 (N130) interacts with FMN. The Nucleophile role is filled by C133. Residues K168 and I194 each coordinate FMN. N195–T196 contacts substrate. Residues G220, G246–G247, and G268–S269 contribute to the FMN site.

The protein belongs to the dihydroorotate dehydrogenase family. Type 1 subfamily. As to quaternary structure, homodimer. FMN is required as a cofactor.

The protein localises to the cytoplasm. The catalysed reaction is (S)-dihydroorotate + fumarate = orotate + succinate. It participates in pyrimidine metabolism; UMP biosynthesis via de novo pathway. Functionally, catalyzes the conversion of dihydroorotate to orotate with fumarate as the electron acceptor. The polypeptide is Dihydroorotate dehydrogenase A (fumarate) (pyrD) (Lactobacillus delbrueckii subsp. bulgaricus (strain ATCC 11842 / DSM 20081 / BCRC 10696 / JCM 1002 / NBRC 13953 / NCIMB 11778 / NCTC 12712 / WDCM 00102 / Lb 14)).